The primary structure comprises 338 residues: 1-aminocyclopropane-1-carboxylate deaminase (338 aa).

The residue at position 51 (K51) is an N6-(pyridoxal phosphate)lysine. The active-site Nucleophile is the S78.

It belongs to the ACC deaminase/D-cysteine desulfhydrase family. As to quaternary structure, homotrimer. The cofactor is pyridoxal 5'-phosphate.

It catalyses the reaction 1-aminocyclopropane-1-carboxylate + H2O = 2-oxobutanoate + NH4(+). In terms of biological role, catalyzes a cyclopropane ring-opening reaction, the irreversible conversion of 1-aminocyclopropane-1-carboxylate (ACC) to ammonia and alpha-ketobutyrate. Allows growth on ACC as a nitrogen source. This is 1-aminocyclopropane-1-carboxylate deaminase from Burkholderia ambifaria (strain ATCC BAA-244 / DSM 16087 / CCUG 44356 / LMG 19182 / AMMD) (Burkholderia cepacia (strain AMMD)).